The chain runs to 195 residues: uncharacterized protein (195 aa).

The segment at 86 to 158 is disordered; the sequence is LPSEGGWTSG…PAPVSGEPPE (73 aa).

This is an uncharacterized protein from Homo sapiens (Human).